Consider the following 242-residue polypeptide: Probable transcriptional regulatory protein Csac_0964 (242 aa).

Residues 1–20 (MSGHSKWANIRHKKEKTDAQ) form a disordered region.

Belongs to the TACO1 family.

The protein localises to the cytoplasm. The chain is Probable transcriptional regulatory protein Csac_0964 from Caldicellulosiruptor saccharolyticus (strain ATCC 43494 / DSM 8903 / Tp8T 6331).